The chain runs to 544 residues: Prolyl 4-hydroxylase subunit alpha-3 (544 aa).

Positions 1–19 are cleaved as a signal peptide; sequence MGPGARLAALLAVLALGTG. Positions 107–131 form a coiled coil; that stretch reads LEASENIRALKDGYEKVEQDLPAFE. The stretch at 227 to 260 is one TPR repeat; the sequence is EDALDHLAFAYFRAGNVSCALSLSREFLLYSPDN. An N-linked (GlcNAc...) asparagine glycan is attached at N242. Residues 422–529 enclose the Fe2OG dioxygenase domain; sequence YAEYLQVVNY…KWVANKWIHE (108 aa). Fe cation contacts are provided by H440 and D442. N-linked (GlcNAc...) asparagine glycosylation occurs at N482. Residue H510 coordinates Fe cation. K520 is a 2-oxoglutarate binding site.

The protein belongs to the P4HA family. As to quaternary structure, heterotetramer of two alpha-3 chains and two beta chains (the beta chain is the multi-functional PDI). Fe(2+) serves as cofactor. It depends on L-ascorbate as a cofactor. N-glycosylation plays no role in the catalytic activity. As to expression, highly expressed in placenta, liver and fetal skin. Weakly expressed in fetal epiphyseal cartilage, fetal liver, fibroblast, lung and skeletal muscle. Expressed also in fibrous cap of carotid atherosclerotic lesions.

It is found in the endoplasmic reticulum lumen. It catalyses the reaction L-prolyl-[collagen] + 2-oxoglutarate + O2 = trans-4-hydroxy-L-prolyl-[collagen] + succinate + CO2. In terms of biological role, catalyzes the post-translational formation of 4-hydroxyproline in -Xaa-Pro-Gly- sequences in collagens and other proteins. The sequence is that of Prolyl 4-hydroxylase subunit alpha-3 (P4HA3) from Homo sapiens (Human).